Reading from the N-terminus, the 202-residue chain is Protein phosphatase 1 regulatory subunit 1B (202 aa).

Position 1 is an N-acetylmethionine (Met1). The tract at residues 1 to 202 is disordered; it reads MDPKDRKKIQ…QRPAHPEPGT (202 aa). Thr34 bears the Phosphothreonine; by PKA mark. The segment covering 41–63 has biased composition (basic and acidic residues); sequence LSEHSSPEEEASPHQRASGEGHH. Residues Ser45 and Ser46 each carry the phosphoserine modification. A Phosphothreonine; by CDK5 modification is found at Thr75. The span at 89-100 shows a compositional bias: polar residues; that stretch reads HLQSISNLGENQ. The residue at position 102 (Ser102) is a Phosphoserine. The span at 109 to 118 shows a compositional bias: basic and acidic residues; it reads GELRELGYPR. Residues 119-136 are compositionally biased toward acidic residues; the sequence is EEEEEEEEEDEEEEEDSQ. Ser135 carries the phosphoserine modification. Positions 191–202 are enriched in basic and acidic residues; it reads EPQRPAHPEPGT.

It belongs to the protein phosphatase inhibitor 1 family. In terms of processing, dopamine- and cyclic AMP-regulated neuronal phosphoprotein. Phosphorylation of Thr-34 is required for activity.

The protein resides in the cytoplasm. In terms of biological role, inhibitor of protein-phosphatase 1. The sequence is that of Protein phosphatase 1 regulatory subunit 1B (PPP1R1B) from Bos taurus (Bovine).